A 313-amino-acid chain; its full sequence is Protein FixB (313 aa).

255–283 (LYLAVGISGQIQHMVGANASQTIFAINKD) is a binding site for FAD.

The protein belongs to the ETF alpha-subunit/FixB family. Heterodimer of FixA and FixB.

It functions in the pathway amine and polyamine metabolism; carnitine metabolism. Functionally, required for anaerobic carnitine reduction. May bring reductant to CaiA. This Escherichia coli O7:K1 (strain IAI39 / ExPEC) protein is Protein FixB.